The sequence spans 135 residues: Insoluble matrix shell protein 5 (135 aa).

The signal sequence occupies residues 1-16; it reads MILVVTLACLIAVVCC. 2 EF-hand domains span residues 21–56 and 93–128; these read TDQG…ADLN and IEFV…TVRP. Ca(2+) contacts are provided by D34, D36, N38, K40, E45, D106, N108, D110, E112, and E117.

As to expression, component of the acid-insoluble organic matrix of the calcified shell.

It is found in the secreted. This Ruditapes philippinarum (Japanese carpet shell) protein is Insoluble matrix shell protein 5.